Consider the following 406-residue polypeptide: Tryptophan synthase beta chain (406 aa).

An N6-(pyridoxal phosphate)lysine modification is found at Lys-99.

It belongs to the TrpB family. In terms of assembly, tetramer of two alpha and two beta chains. Pyridoxal 5'-phosphate serves as cofactor.

The catalysed reaction is (1S,2R)-1-C-(indol-3-yl)glycerol 3-phosphate + L-serine = D-glyceraldehyde 3-phosphate + L-tryptophan + H2O. The protein operates within amino-acid biosynthesis; L-tryptophan biosynthesis; L-tryptophan from chorismate: step 5/5. In terms of biological role, the beta subunit is responsible for the synthesis of L-tryptophan from indole and L-serine. This Methylobacterium sp. (strain 4-46) protein is Tryptophan synthase beta chain.